The primary structure comprises 216 residues: Pyrrolidone-carboxylate peptidase (216 aa).

Active-site residues include Glu80, Cys143, and His167.

This sequence belongs to the peptidase C15 family. As to quaternary structure, homotetramer.

It localises to the cytoplasm. The catalysed reaction is Release of an N-terminal pyroglutamyl group from a polypeptide, the second amino acid generally not being Pro.. Its function is as follows. Removes 5-oxoproline from various penultimate amino acid residues except L-proline. This Streptomyces coelicolor (strain ATCC BAA-471 / A3(2) / M145) protein is Pyrrolidone-carboxylate peptidase (pcp).